A 259-amino-acid polypeptide reads, in one-letter code: Ribonuclease T2-B (259 aa).

An N-terminal signal peptide occupies residues 1–29 (MAPAEARGALPGWISVLGWGLALCSLCGA). Cys-53 and Cys-59 form a disulfide bridge. The active site involves His-69. 3 disulfide bridges follow: Cys-79/Cys-125, Cys-188/Cys-244, and Cys-206/Cys-217. N-linked (GlcNAc...) asparagine glycosylation is found at Asn-80 and Asn-110. Catalysis depends on residues Glu-118 and His-122. N-linked (GlcNAc...) asparagine glycosylation occurs at Asn-216.

This sequence belongs to the RNase T2 family.

It localises to the secreted. Its subcellular location is the lysosome lumen. The protein resides in the endoplasmic reticulum lumen. It is found in the mitochondrion intermembrane space. The enzyme catalyses a ribonucleotidyl-ribonucleotide-RNA + H2O = a 3'-end 3'-phospho-ribonucleotide-RNA + a 5'-end dephospho-ribonucleoside-RNA + H(+). It catalyses the reaction an adenylyl-uridine-RNA = a 3'-end 2',3'-cyclophospho-AMP-RNA + a 5'-end dephospho-uridine-RNA. The catalysed reaction is a guanylyl-uridine-RNA = a 3'-end 2',3'-cyclophospho-GMP-RNA + a 5'-end dephospho-uridine-RNA. Inhibited by Zn(2+) and Cu(2+). Functionally, ribonuclease that plays an essential role in innate immune response by recognizing and degrading RNAs from microbial pathogens that are subsequently sensed by TLR8. Cleaves preferentially single-stranded RNA molecules between purine and uridine residues, which critically contributes to the supply of catabolic uridine and the generation of purine-2',3'-cyclophosphate-terminated oligoribonucleotides. In turn, RNase T2 degradation products promote the RNA-dependent activation of TLR8. In plasmacytoid dendritic cells, it cooperates with PLD3 or PLD4 5'-&gt;3' exonucleases to process RNA fragments and release 2',3'-cyclic guanosine monophosphate (2',3'-cGMP), a potent stimulatory ligand for TLR7. Also plays a key role in degradation of mitochondrial RNA and processing of non-coding RNA imported from the cytosol into mitochondria. Participates as well in degradation of mitochondrion-associated cytosolic rRNAs. This chain is Ribonuclease T2-B, found in Mus musculus (Mouse).